A 64-amino-acid polypeptide reads, in one-letter code: MPDVKCVCCKEGKECACFGQDCCKTGECCKDGTCCGICTNAACKCANGCKCGSGCSCTEGNCAC.

It belongs to the metallothionein superfamily. Type 4 family.

Metallothioneins have a high content of cysteine residues that bind various heavy metals. The chain is Metallothionein-A (MTA) from Strongylocentrotus purpuratus (Purple sea urchin).